Here is a 787-residue protein sequence, read N- to C-terminus: Signal transducer and activator of transcription 5B (787 aa).

Phosphotyrosine is present on Tyr-90. Phosphoserine is present on Ser-128. Residues 589 to 686 (WNDGAILGFV…EVYSKYYTPV (98 aa)) enclose the SH2 domain. Tyr-682 is modified (phosphotyrosine). Tyr-699 is modified (phosphotyrosine; by HCK, JAK and PTK6).

This sequence belongs to the transcription factor STAT family. As to quaternary structure, upon activation, forms a homodimer or a heterodimer with a related family member. Binds NR3C1. Interacts with NCOA1. Interacts with NMI. Interacts with SOCS7. Interacts (via SH2 domain) with INSR. Interacts with CPEB3; this inhibits STAT5B-mediated transcriptional activation. Post-translationally, tyrosine phosphorylated in response to signaling via activated KIT, resulting in translocation to the nucleus. Tyrosine phosphorylated in response to signaling via activated FLT3; wild-type FLT3 results in much weaker phosphorylation than constitutively activated mutant FLT3. Alternatively, can be phosphorylated by JAK2. Phosphorylation at Tyr-699 by PTK6 or HCK leads to an increase of its transcriptional activity.

It is found in the cytoplasm. The protein localises to the nucleus. Its function is as follows. Carries out a dual function: signal transduction and activation of transcription. Mediates cellular responses to the cytokine KITLG/SCF and other growth factors. Binds to the GAS element and activates PRL-induced transcription. Positively regulates hematopoietic/erythroid differentiation. This chain is Signal transducer and activator of transcription 5B (STAT5B), found in Bos taurus (Bovine).